Reading from the N-terminus, the 569-residue chain is Mitogen-activated protein kinase 8 (569 aa).

The Protein kinase domain maps to 13–304 (YKIQEVIGKG…AEEALADPYF (292 aa)). Residues 19 to 27 (IGKGSYGVV) and lysine 42 each bind ATP. Aspartate 139 functions as the Proton acceptor in the catalytic mechanism. The residue at position 175 (threonine 175) is a Phosphothreonine. Residues 175-177 (TDY) carry the TXY motif. Tyrosine 177 carries the phosphotyrosine modification. A disordered region spans residues 404 to 432 (TTVHSAPIPPKDHQNITSQVPQRIPGRTG).

It belongs to the protein kinase superfamily. CMGC Ser/Thr protein kinase family. MAP kinase subfamily. Post-translationally, dually phosphorylated on Thr-175 and Tyr-177, which activates the enzyme. As to expression, expressed in leaves and panicles.

It catalyses the reaction L-seryl-[protein] + ATP = O-phospho-L-seryl-[protein] + ADP + H(+). The enzyme catalyses L-threonyl-[protein] + ATP = O-phospho-L-threonyl-[protein] + ADP + H(+). Its activity is regulated as follows. Activated by threonine and tyrosine phosphorylation. In Oryza sativa subsp. japonica (Rice), this protein is Mitogen-activated protein kinase 8 (MPK8).